The chain runs to 271 residues: Hydroxyethylthiazole kinase (271 aa).

M45 contributes to the substrate binding site. Residues R121 and T168 each contribute to the ATP site. G195 is a substrate binding site.

The protein belongs to the Thz kinase family. The cofactor is Mg(2+).

The enzyme catalyses 5-(2-hydroxyethyl)-4-methylthiazole + ATP = 4-methyl-5-(2-phosphooxyethyl)-thiazole + ADP + H(+). It functions in the pathway cofactor biosynthesis; thiamine diphosphate biosynthesis; 4-methyl-5-(2-phosphoethyl)-thiazole from 5-(2-hydroxyethyl)-4-methylthiazole: step 1/1. Its function is as follows. Catalyzes the phosphorylation of the hydroxyl group of 4-methyl-5-beta-hydroxyethylthiazole (THZ). This chain is Hydroxyethylthiazole kinase, found in Bacillus pumilus (strain SAFR-032).